Consider the following 139-residue polypeptide: D-ribose pyranase (139 aa).

The active-site Proton donor is the H20. Substrate contacts are provided by residues D28, H106, and Y128–N130.

The protein belongs to the RbsD / FucU family. RbsD subfamily. In terms of assembly, homodecamer.

The protein resides in the cytoplasm. The enzyme catalyses beta-D-ribopyranose = beta-D-ribofuranose. It functions in the pathway carbohydrate metabolism; D-ribose degradation; D-ribose 5-phosphate from beta-D-ribopyranose: step 1/2. Its function is as follows. Catalyzes the interconversion of beta-pyran and beta-furan forms of D-ribose. This chain is D-ribose pyranase, found in Cronobacter sakazakii (strain ATCC BAA-894) (Enterobacter sakazakii).